The primary structure comprises 138 residues: Transcription antitermination protein NusB (138 aa).

This sequence belongs to the NusB family.

Involved in transcription antitermination. Required for transcription of ribosomal RNA (rRNA) genes. Binds specifically to the boxA antiterminator sequence of the ribosomal RNA (rrn) operons. This chain is Transcription antitermination protein NusB, found in Helicobacter pylori (strain J99 / ATCC 700824) (Campylobacter pylori J99).